The primary structure comprises 452 residues: Phosphoglucosamine mutase (452 aa).

Catalysis depends on serine 97, which acts as the Phosphoserine intermediate. Mg(2+) is bound by residues serine 97, aspartate 236, aspartate 238, and aspartate 240. Serine 97 bears the Phosphoserine mark.

This sequence belongs to the phosphohexose mutase family. Mg(2+) serves as cofactor. Post-translationally, activated by phosphorylation.

It carries out the reaction alpha-D-glucosamine 1-phosphate = D-glucosamine 6-phosphate. In terms of biological role, catalyzes the conversion of glucosamine-6-phosphate to glucosamine-1-phosphate. The chain is Phosphoglucosamine mutase from Prochlorococcus marinus (strain MIT 9515).